Reading from the N-terminus, the 284-residue chain is Short chain dehydrogenase/reductase AacuD (284 aa).

An NADP(+)-binding site is contributed by valine 37. Residues serine 166 and tyrosine 180 each act as proton donor in the active site. Positions 180, 184, and 215 each coordinate NADP(+). The active-site Lowers pKa of active site Tyr is lysine 184.

This sequence belongs to the short-chain dehydrogenases/reductases (SDR) family.

The protein operates within secondary metabolite biosynthesis. Its function is as follows. Short chain dehydrogenase/reductase; part of the gene cluster that mediates the biosynthesis of the tetrahydroxanthone dimer secalonic acid D. The pathway begins with the synthesis of atrochrysone thioester by the polyketide synthase AacuL. The atrochrysone carboxyl ACP thioesterase AacuM then breaks the thioester bond and releases the atrochrysone carboxylic acid from AacuL. Atrochrysone carboxylic acid is decarboxylated by the decarboxylase AacuI, and oxidized by the anthrone oxygenase AacuG to yield emodin. Emodin is then reduced to emodin hydroquinone by a yet unidentified oxidoreductase. A-ring reduction by the short chain dehydrogenase AacuN, dehydration by the scytalone dehydratase-like protein AacuK and probable spontaneous re-oxidation, results in overall deoxygenation to chrysophanol. Baeyer-Villiger oxidation by the Baeyer-Villiger monooxygenase (BVMO) AacuH then yields monodictyphenone. Monodictyphenone is transformed into compounds with the tetrahydroxanthone skeleton via methylesterification by the methyltransferase AacuQ, followed by the action of the flavin-dependent monooxygenase AacuC, the isomerase AacuP, and the short chain dehydrogenase/reductase AacuF or AacuD. AacuF and AacuD should accept the same compound as a substrate but perform the ketoreduction with a different stereoselectivity, thus yielding blennolides B and A, respectively. In the final step of the biosynthesis, the cytochrome P450 monooxygenase AacuE accepts blennolide B and/or blennolide A to conduct the dimerization reaction to furnish the tetrahydroxanthone dimers, secalonic acids D, B, and F. The sequence is that of Short chain dehydrogenase/reductase AacuD from Aspergillus aculeatus (strain ATCC 16872 / CBS 172.66 / WB 5094).